We begin with the raw amino-acid sequence, 62 residues long: Small ribosomal subunit protein eS27 (62 aa).

Cys17, Cys20, Cys36, and Cys39 together coordinate Zn(2+). A C4-type zinc finger spans residues 17–39 (CPDCDNEQTVFSKASTTVKCVVC).

The protein belongs to the eukaryotic ribosomal protein eS27 family. In terms of assembly, part of the 30S ribosomal subunit. It depends on Zn(2+) as a cofactor.

The chain is Small ribosomal subunit protein eS27 from Methanoregula boonei (strain DSM 21154 / JCM 14090 / 6A8).